Reading from the N-terminus, the 144-residue chain is Gonadotropin subunit beta-2 (144 aa).

The signal sequence occupies residues 1 to 27 (MGTPVKILVVRNHILFSVVVLLAVAQS). Cystine bridges form between Cys33–Cys81, Cys47–Cys96, Cys50–Cys134, Cys58–Cys112, Cys62–Cys114, and Cys117–Cys124. A glycan (N-linked (GlcNAc...) asparagine) is linked at Asn37. The propeptide occupies 143–144 (VY).

This sequence belongs to the glycoprotein hormones subunit beta family. In terms of assembly, heterodimer of an alpha and a beta chain.

Its subcellular location is the secreted. Involved in gametogenesis and steroidogenesis. The polypeptide is Gonadotropin subunit beta-2 (cgbb) (Cyprinus carpio (Common carp)).